The following is a 259-amino-acid chain: MSLSSLAISANNISYRIGSKIILDDINLELRCGEVTTLLGPNGAGKSTLLKLLCDEITSFNDIRYFGKAKDQWDGNELAKRLGVLPQHSTLSFAFNVNEVVELGGLPLSLSNQALREITSNMMQKTVIKHLAERAYPSLSGGEKQRVHLARVLTQVSQHQQKIVMLDEPTSALDLSHQHNTLKLARELASEGAAVIVVLHDLNLAAQYSDRVIVLQDGKLQADGAPWEAITSKMIENVYGHKTLVQAHPTLNFPVVFAA.

Positions 8–242 constitute an ABC transporter domain; sequence ISANNISYRI…KMIENVYGHK (235 aa). 40 to 47 lines the ATP pocket; sequence GPNGAGKS.

Belongs to the ABC transporter superfamily. Heme (hemin) importer (TC 3.A.1.14.5) family. The complex is composed of two ATP-binding proteins (HmuV), two transmembrane proteins (HmuU) and a solute-binding protein (HmuT).

It is found in the cell inner membrane. Part of the ABC transporter complex HmuTUV involved in hemin import. Responsible for energy coupling to the transport system. In Aliivibrio fischeri (strain ATCC 700601 / ES114) (Vibrio fischeri), this protein is Hemin import ATP-binding protein HmuV.